The following is a 303-amino-acid chain: WD repeat-containing protein 38 (303 aa).

WD repeat units follow at residues 24-63 (QHHGEVNCSAFSPDGRTLLTASDDGCVYVWGTKSGRLLWR), 66-105 (GHRGPVKSCCFSPDGRLIASSSSDHSIRLWDVARSKCLHV), 108-147 (GHQRSVETVSFSPDSKQLASGGWDKRAIVWEVQSGRRVHL), 150-189 (GHCDSIQSSDFSPTSDSLATGSWDSTVHIWDLRASTPVVS), 195-233 (GHTGNISCLCYSASGLLASGSWDKTICVWKPTTNNLPLQ), 236-277 (GHTI…ETLK), and 279-303 (MLDVAHACIFTPDGKLLVSGAAVTR).

This Mus musculus (Mouse) protein is WD repeat-containing protein 38 (Wdr38).